The sequence spans 38 residues: Large ribosomal subunit protein bL36 (38 aa).

Belongs to the bacterial ribosomal protein bL36 family.

The protein is Large ribosomal subunit protein bL36 of Buchnera aphidicola subsp. Baizongia pistaciae (strain Bp).